A 169-amino-acid polypeptide reads, in one-letter code: Ion-translocating oxidoreductase complex subunit B (169 aa).

Positions methionine 1–serine 23 are hydrophobic. The 60-residue stretch at serine 30 to lysine 89 folds into the 4Fe-4S domain. The [4Fe-4S] cluster site is built by cysteine 47, cysteine 50, cysteine 55, cysteine 72, cysteine 116, cysteine 119, cysteine 122, cysteine 126, cysteine 146, cysteine 149, cysteine 152, and cysteine 156. 4Fe-4S ferredoxin-type domains lie at serine 107–asparagine 136 and phenylalanine 137–methionine 166.

This sequence belongs to the 4Fe4S bacterial-type ferredoxin family. RnfB subfamily. The complex is composed of six subunits: RnfA, RnfB, RnfC, RnfD, RnfE and RnfG. Requires [4Fe-4S] cluster as cofactor.

Its subcellular location is the cell inner membrane. Functionally, part of a membrane-bound complex that couples electron transfer with translocation of ions across the membrane. The protein is Ion-translocating oxidoreductase complex subunit B of Buchnera aphidicola subsp. Baizongia pistaciae (strain Bp).